Reading from the N-terminus, the 144-residue chain is MIKLESLQDPSPRKRRTKLLGRGPSSGHGKTSCRGHKGDGSRSGYKRRFGYEGGGVPLYRRVPTRGFSHARFDKCVEEITTQRLNALFSEGEEITLEALKQKKAIDKRAIRVKVIVKGDLEKTFIWKDANVVLSQGVRNLIGVA.

A disordered region spans residues Met-1–Arg-48.

This sequence belongs to the universal ribosomal protein uL15 family. In terms of assembly, part of the 50S ribosomal subunit.

Functionally, binds to the 23S rRNA. The protein is Large ribosomal subunit protein uL15 of Chlamydia abortus (strain DSM 27085 / S26/3) (Chlamydophila abortus).